Consider the following 159-residue polypeptide: MARFPITIKGFHKLEQELKHLKYVERLKITTDISTAREFGDLSENAEYKAAKERQLLNDKKIYDLENKLANAEVIEITKINSNSVKFGARVVLLDLDTEKEVVYQIVGEYEADITQNLISIASPIAQALIGKKAGDIIEVITPKGGRFYELLKVQYVDF.

The protein belongs to the GreA/GreB family.

Functionally, necessary for efficient RNA polymerase transcription elongation past template-encoded arresting sites. The arresting sites in DNA have the property of trapping a certain fraction of elongating RNA polymerases that pass through, resulting in locked ternary complexes. Cleavage of the nascent transcript by cleavage factors such as GreA or GreB allows the resumption of elongation from the new 3'terminus. GreA releases sequences of 2 to 3 nucleotides. The protein is Transcription elongation factor GreA of Orientia tsutsugamushi (strain Boryong) (Rickettsia tsutsugamushi).